A 726-amino-acid chain; its full sequence is Catalase-peroxidase (726 aa).

The tract at residues Met-1–Ser-33 is disordered. Positions Trp-105–Tyr-226 form a cross-link, tryptophyl-tyrosyl-methioninium (Trp-Tyr) (with M-252). His-106 functions as the Proton acceptor in the catalytic mechanism. A cross-link (tryptophyl-tyrosyl-methioninium (Tyr-Met) (with W-105)) is located at residues Tyr-226–Met-252. A heme b-binding site is contributed by His-267.

Belongs to the peroxidase family. Peroxidase/catalase subfamily. As to quaternary structure, homodimer or homotetramer. Heme b is required as a cofactor. Formation of the three residue Trp-Tyr-Met cross-link is important for the catalase, but not the peroxidase activity of the enzyme.

The catalysed reaction is H2O2 + AH2 = A + 2 H2O. It catalyses the reaction 2 H2O2 = O2 + 2 H2O. Its function is as follows. Bifunctional enzyme with both catalase and broad-spectrum peroxidase activity. The chain is Catalase-peroxidase from Salmonella choleraesuis (strain SC-B67).